Consider the following 266-residue polypeptide: MKAKKYYGQNFISDLNLINRIVDVLDQNKNQLIIEIGPGKGALTKELVKRFDKVVVIEIDQDMVEILKAKFDHSNLEIIQADVLEIDLKQLISKYDYEKISIISNTPYYITSEILFKTLQISDLLTKAVFMLQKEVALRICSNKNENNYNNLSIACQFYSQRNFEFVVNKKMFYPIPKVDSAIISLTFNDIYKKQINDDKKFIEFVRILFNNKRKTILNNLNNIIQNKNKALEYLNTLNISSNLRPEQLDIDEYIKLFNLVYTSNF.

6 residues coordinate S-adenosyl-L-methionine: N10, I12, G37, E58, D82, and N105.

This sequence belongs to the class I-like SAM-binding methyltransferase superfamily. rRNA adenine N(6)-methyltransferase family. RsmA subfamily.

It is found in the cytoplasm. It catalyses the reaction adenosine(1518)/adenosine(1519) in 16S rRNA + 4 S-adenosyl-L-methionine = N(6)-dimethyladenosine(1518)/N(6)-dimethyladenosine(1519) in 16S rRNA + 4 S-adenosyl-L-homocysteine + 4 H(+). Its function is as follows. Specifically dimethylates two adjacent adenosines (A1518 and A1519) in the loop of a conserved hairpin near the 3'-end of 16S rRNA in the 30S particle. May play a critical role in biogenesis of 30S subunits. In Mycoplasma mycoides subsp. mycoides SC (strain CCUG 32753 / NCTC 10114 / PG1), this protein is Ribosomal RNA small subunit methyltransferase A.